A 377-amino-acid polypeptide reads, in one-letter code: RIB43A-like with coiled-coils protein 2 (377 aa).

The stretch at N217 to L246 forms a coiled coil. The disordered stretch occupies residues K354–R377.

The protein belongs to the RIB43A family. As to quaternary structure, microtubule inner protein component of sperm flagellar doublet microtubules.

The protein resides in the cytoplasm. Its subcellular location is the cytoskeleton. It localises to the cilium axoneme. The protein localises to the flagellum axoneme. In terms of biological role, microtubule inner protein (MIP) part of the dynein-decorated doublet microtubules (DMTs) in cilia axoneme, which is required for motile cilia beating. This is RIB43A-like with coiled-coils protein 2 from Mus musculus (Mouse).